Consider the following 346-residue polypeptide: E3 ubiquitin-protein ligase ARK2C (346 aa).

2 disordered regions span residues 23 to 76 (PFQR…QHSG) and 267 to 288 (PHKYKKRRPQDGKGKKDEGEES). Residues 266–268 (FPH) form a ubiquitin binding region. Residues 275–284 (PQDGKGKKDE) show a composition bias toward basic and acidic residues. Zn(2+)-binding residues include C294 and C297. An RING-type; atypical zinc finger spans residues 294 to 335 (CTICLSMLEDGEDVRRLPCMHLFHQLCVDQWLAMSKKCPICR). The ubiquitin binding stretch occupies residues 309–313 (RLPCM). Zn(2+) contacts are provided by H317 and C320.

It belongs to the Arkadia family. As to quaternary structure, monomer; binding to the ubiquitin-conjugating enzyme E2 does not trigger homodimerization.

It localises to the nucleus. The catalysed reaction is S-ubiquitinyl-[E2 ubiquitin-conjugating enzyme]-L-cysteine + [acceptor protein]-L-lysine = [E2 ubiquitin-conjugating enzyme]-L-cysteine + N(6)-ubiquitinyl-[acceptor protein]-L-lysine.. Binds free ubiquitin non-covalently via its RING-type zinc finger. Ubiquitin-binding leads to enhance the E3 ubiquitin-protein ligase activity by stabilizing the ubiquitin-conjugating enzyme E2 (donor ubiquitin) in the 'closed' conformation and activating ubiquitin transfer. E3 ubiquitin-protein ligase that acts as a regulator of motor axon elongation. Required for efficient motor axon extension in the dorsal forelimb by enhancing the transcriptional responses of the SMAD1/SMAD5/SMAD8 effectors, which are activated downstream of BMP. Acts by mediating ubiquitination and degradation of SMAD inhibitors such as SMAD6, SMAD7, SKI and SNON isoform of SKIL. The chain is E3 ubiquitin-protein ligase ARK2C from Homo sapiens (Human).